We begin with the raw amino-acid sequence, 381 residues long: Alkanesulfonate monooxygenase (381 aa).

This sequence belongs to the SsuD family. In terms of assembly, homotetramer.

It carries out the reaction an alkanesulfonate + FMNH2 + O2 = an aldehyde + FMN + sulfite + H2O + 2 H(+). Its function is as follows. Catalyzes the desulfonation of aliphatic sulfonates. This Shigella flexneri protein is Alkanesulfonate monooxygenase.